Here is a 250-residue protein sequence, read N- to C-terminus: tRNA (guanine-N(1)-)-methyltransferase (250 aa).

S-adenosyl-L-methionine contacts are provided by residues glycine 116 and 136–141 (IGDYVL).

This sequence belongs to the RNA methyltransferase TrmD family. Homodimer.

The protein localises to the cytoplasm. It carries out the reaction guanosine(37) in tRNA + S-adenosyl-L-methionine = N(1)-methylguanosine(37) in tRNA + S-adenosyl-L-homocysteine + H(+). In terms of biological role, specifically methylates guanosine-37 in various tRNAs. This chain is tRNA (guanine-N(1)-)-methyltransferase, found in Pseudomonas savastanoi pv. phaseolicola (strain 1448A / Race 6) (Pseudomonas syringae pv. phaseolicola (strain 1448A / Race 6)).